Reading from the N-terminus, the 300-residue chain is Acetylglutamate kinase (300 aa).

Residues 73–74, Arg95, and Asn197 each bind substrate; that span reads GG.

It belongs to the acetylglutamate kinase family. ArgB subfamily.

The protein resides in the cytoplasm. It catalyses the reaction N-acetyl-L-glutamate + ATP = N-acetyl-L-glutamyl 5-phosphate + ADP. The protein operates within amino-acid biosynthesis; L-arginine biosynthesis; N(2)-acetyl-L-ornithine from L-glutamate: step 2/4. Its function is as follows. Catalyzes the ATP-dependent phosphorylation of N-acetyl-L-glutamate. The polypeptide is Acetylglutamate kinase (Bordetella bronchiseptica (strain ATCC BAA-588 / NCTC 13252 / RB50) (Alcaligenes bronchisepticus)).